The sequence spans 390 residues: Chorismate synthase (390 aa).

Positions 40 and 46 each coordinate NADP(+). Residues 128 to 130, 251 to 252, glycine 296, 311 to 315, and arginine 339 each bind FMN; these read RAS, QA, and KPIPT.

It belongs to the chorismate synthase family. As to quaternary structure, homotetramer. FMNH2 is required as a cofactor.

The enzyme catalyses 5-O-(1-carboxyvinyl)-3-phosphoshikimate = chorismate + phosphate. Its pathway is metabolic intermediate biosynthesis; chorismate biosynthesis; chorismate from D-erythrose 4-phosphate and phosphoenolpyruvate: step 7/7. Catalyzes the anti-1,4-elimination of the C-3 phosphate and the C-6 proR hydrogen from 5-enolpyruvylshikimate-3-phosphate (EPSP) to yield chorismate, which is the branch point compound that serves as the starting substrate for the three terminal pathways of aromatic amino acid biosynthesis. This reaction introduces a second double bond into the aromatic ring system. This Sulfurihydrogenibium sp. (strain YO3AOP1) protein is Chorismate synthase.